The following is a 75-amino-acid chain: Exodeoxyribonuclease 7 small subunit (75 aa).

The protein belongs to the XseB family. Heterooligomer composed of large and small subunits.

It localises to the cytoplasm. The enzyme catalyses Exonucleolytic cleavage in either 5'- to 3'- or 3'- to 5'-direction to yield nucleoside 5'-phosphates.. Its function is as follows. Bidirectionally degrades single-stranded DNA into large acid-insoluble oligonucleotides, which are then degraded further into small acid-soluble oligonucleotides. The sequence is that of Exodeoxyribonuclease 7 small subunit from Caldanaerobacter subterraneus subsp. tengcongensis (strain DSM 15242 / JCM 11007 / NBRC 100824 / MB4) (Thermoanaerobacter tengcongensis).